The following is a 427-amino-acid chain: Enolase (427 aa).

Gln-163 provides a ligand contact to (2R)-2-phosphoglycerate. The active-site Proton donor is Glu-205. Positions 242, 285, and 312 each coordinate Mg(2+). Residues Lys-337, Arg-366, Ser-367, and Lys-388 each contribute to the (2R)-2-phosphoglycerate site. The active-site Proton acceptor is Lys-337.

It belongs to the enolase family. Mg(2+) serves as cofactor.

Its subcellular location is the cytoplasm. It is found in the secreted. The protein resides in the cell surface. It carries out the reaction (2R)-2-phosphoglycerate = phosphoenolpyruvate + H2O. The protein operates within carbohydrate degradation; glycolysis; pyruvate from D-glyceraldehyde 3-phosphate: step 4/5. In terms of biological role, catalyzes the reversible conversion of 2-phosphoglycerate (2-PG) into phosphoenolpyruvate (PEP). It is essential for the degradation of carbohydrates via glycolysis. This is Enolase from Burkholderia thailandensis (strain ATCC 700388 / DSM 13276 / CCUG 48851 / CIP 106301 / E264).